The following is a 135-amino-acid chain: Small ribosomal subunit protein uS11 (135 aa).

This sequence belongs to the universal ribosomal protein uS11 family. In terms of assembly, part of the 30S ribosomal subunit. Interacts with proteins S7 and S18. Binds to IF-3.

Its function is as follows. Located on the platform of the 30S subunit, it bridges several disparate RNA helices of the 16S rRNA. Forms part of the Shine-Dalgarno cleft in the 70S ribosome. The protein is Small ribosomal subunit protein uS11 of Cutibacterium acnes (strain DSM 16379 / KPA171202) (Propionibacterium acnes).